Reading from the N-terminus, the 137-residue chain is MPKAEGRIFDFKGHDAIRTDFLEAIDFDGKDEYIKIETDEFSAVCPFSGLPDIGRVIIEYYPDGGKIVELKSLKYYFVSFRNVGIYQEEATKRIYEDLKNLLKTDRIRVTVIYNIRGGIKTTTQMGSLEGKKSGEVE.

The Thioimide intermediate role is filled by cysteine 45. The active-site Proton donor is aspartate 52. Substrate contacts are provided by residues 68-70 and 87-88; these read VEL and QE.

The protein belongs to the GTP cyclohydrolase I family. QueF type 1 subfamily.

The protein localises to the cytoplasm. It catalyses the reaction 7-aminomethyl-7-carbaguanine + 2 NADP(+) = 7-cyano-7-deazaguanine + 2 NADPH + 3 H(+). The protein operates within tRNA modification; tRNA-queuosine biosynthesis. Its function is as follows. Catalyzes the NADPH-dependent reduction of 7-cyano-7-deazaguanine (preQ0) to 7-aminomethyl-7-deazaguanine (preQ1). In Thermotoga petrophila (strain ATCC BAA-488 / DSM 13995 / JCM 10881 / RKU-1), this protein is NADPH-dependent 7-cyano-7-deazaguanine reductase.